A 350-amino-acid chain; its full sequence is uncharacterized protein (350 aa).

Residues aspartate 214, aspartate 225, histidine 289, glutamate 318, and glutamate 332 each coordinate Mn(2+).

Belongs to the peptidase M24B family. Mn(2+) serves as cofactor.

This is an uncharacterized protein from Staphylococcus saprophyticus subsp. saprophyticus (strain ATCC 15305 / DSM 20229 / NCIMB 8711 / NCTC 7292 / S-41).